Here is a 63-residue protein sequence, read N- to C-terminus: Large ribosomal subunit protein uL30 (63 aa).

This sequence belongs to the universal ribosomal protein uL30 family. Part of the 50S ribosomal subunit.

In Rhodospirillum rubrum (strain ATCC 11170 / ATH 1.1.1 / DSM 467 / LMG 4362 / NCIMB 8255 / S1), this protein is Large ribosomal subunit protein uL30.